Reading from the N-terminus, the 148-residue chain is uncharacterized protein (148 aa).

The chain crosses the membrane as a helical span at residues 7 to 29 (MLILMSLVKIVLTCLPTGVIEWL).

It is found in the membrane. This is an uncharacterized protein from Bacillus subtilis (strain 168).